The following is a 126-amino-acid chain: Large ribosomal subunit protein uL22 (126 aa).

This sequence belongs to the universal ribosomal protein uL22 family. As to quaternary structure, part of the 50S ribosomal subunit.

This protein binds specifically to 23S rRNA; its binding is stimulated by other ribosomal proteins, e.g. L4, L17, and L20. It is important during the early stages of 50S assembly. It makes multiple contacts with different domains of the 23S rRNA in the assembled 50S subunit and ribosome. In terms of biological role, the globular domain of the protein is located near the polypeptide exit tunnel on the outside of the subunit, while an extended beta-hairpin is found that lines the wall of the exit tunnel in the center of the 70S ribosome. The polypeptide is Large ribosomal subunit protein uL22 (Bradyrhizobium sp. (strain BTAi1 / ATCC BAA-1182)).